We begin with the raw amino-acid sequence, 208 residues long: Predicted GPI-anchored protein 37 (208 aa).

The signal sequence occupies residues 1 to 18 (MLFTQLIILLTVTSQALS). The disordered stretch occupies residues 33–93 (TKRLGGGSRG…SSSSSGSRNW (61 aa)). Residues 36–53 (LGGGSRGGSSSGSRGGSS) are compositionally biased toward gly residues. Low complexity predominate over residues 54–63 (SGSSSGSSSG). Residue asparagine 173 is glycosylated (N-linked (GlcNAc...) asparagine). Residue serine 185 is the site of GPI-anchor amidated serine attachment. A propeptide spans 186 to 208 (SSLNIPSTHFYLIGFAAAYSIVL) (removed in mature form).

Belongs to the PGA37 family.

The protein localises to the cell membrane. Predicted GPI-anchored protein which may have a role during host infection. The sequence is that of Predicted GPI-anchored protein 37 (PGA37) from Candida albicans (strain SC5314 / ATCC MYA-2876) (Yeast).